The primary structure comprises 111 residues: Large ribosomal subunit protein P1 (111 aa).

The tract at residues 84–111 is disordered; sequence PAEAAAAEEKKEEEKEESDEDMGFGLFD.

Belongs to the eukaryotic ribosomal protein P1/P2 family. In terms of assembly, P1 and P2 exist as dimers at the large ribosomal subunit. In terms of processing, phosphorylated.

Functionally, plays an important role in the elongation step of protein synthesis. This is Large ribosomal subunit protein P1 from Aspergillus fumigatus (strain ATCC MYA-4609 / CBS 101355 / FGSC A1100 / Af293) (Neosartorya fumigata).